The following is a 231-amino-acid chain: Putative N-acetylmannosamine-6-phosphate 2-epimerase (231 aa).

Belongs to the NanE family.

It catalyses the reaction an N-acyl-D-glucosamine 6-phosphate = an N-acyl-D-mannosamine 6-phosphate. Its pathway is amino-sugar metabolism; N-acetylneuraminate degradation; D-fructose 6-phosphate from N-acetylneuraminate: step 3/5. Converts N-acetylmannosamine-6-phosphate (ManNAc-6-P) to N-acetylglucosamine-6-phosphate (GlcNAc-6-P). The chain is Putative N-acetylmannosamine-6-phosphate 2-epimerase from Listeria innocua serovar 6a (strain ATCC BAA-680 / CLIP 11262).